Here is a 390-residue protein sequence, read N- to C-terminus: DNA polymerase IV (390 aa).

A UmuC domain is found at Val6–Gly187. Mg(2+)-binding residues include Asp10 and Asp105. Residue Glu106 is part of the active site.

It belongs to the DNA polymerase type-Y family. As to quaternary structure, monomer. Mg(2+) is required as a cofactor.

It is found in the cytoplasm. The catalysed reaction is DNA(n) + a 2'-deoxyribonucleoside 5'-triphosphate = DNA(n+1) + diphosphate. Its function is as follows. Poorly processive, error-prone DNA polymerase involved in untargeted mutagenesis. Copies undamaged DNA at stalled replication forks, which arise in vivo from mismatched or misaligned primer ends. These misaligned primers can be extended by PolIV. Exhibits no 3'-5' exonuclease (proofreading) activity. May be involved in translesional synthesis, in conjunction with the beta clamp from PolIII. The polypeptide is DNA polymerase IV (Dehalococcoides mccartyi (strain ATCC BAA-2266 / KCTC 15142 / 195) (Dehalococcoides ethenogenes (strain 195))).